The primary structure comprises 51 residues: Small ribosomal subunit protein uS13 (51 aa).

The protein belongs to the universal ribosomal protein uS13 family. In terms of assembly, part of the 30S ribosomal subunit. Forms a loose heterodimer with protein S19. Forms two bridges to the 50S subunit in the 70S ribosome.

In terms of biological role, located at the top of the head of the 30S subunit, it contacts several helices of the 16S rRNA. In the 70S ribosome it contacts the 23S rRNA (bridge B1a) and protein L5 of the 50S subunit (bridge B1b), connecting the 2 subunits; these bridges are implicated in subunit movement. Contacts the tRNAs in the A and P-sites. In Lactococcus lactis subsp. cremoris (Streptococcus cremoris), this protein is Small ribosomal subunit protein uS13 (rpsM).